We begin with the raw amino-acid sequence, 396 residues long: Elongation factor Tu (396 aa).

The 197-residue stretch at 10–206 (KPHCNIGTIG…AVDAYIPQPE (197 aa)) folds into the tr-type G domain. Residues 19–26 (GHVDHGKT) are G1. GTP is bound at residue 19–26 (GHVDHGKT). Threonine 26 provides a ligand contact to Mg(2+). The G2 stretch occupies residues 60-64 (GITIS). The G3 stretch occupies residues 81 to 84 (DCPG). GTP-binding positions include 81–85 (DCPGH) and 136–139 (NKCD). The G4 stretch occupies residues 136–139 (NKCD). Residues 174–176 (SAL) form a G5 region.

It belongs to the TRAFAC class translation factor GTPase superfamily. Classic translation factor GTPase family. EF-Tu/EF-1A subfamily. Monomer.

It localises to the cytoplasm. The catalysed reaction is GTP + H2O = GDP + phosphate + H(+). In terms of biological role, GTP hydrolase that promotes the GTP-dependent binding of aminoacyl-tRNA to the A-site of ribosomes during protein biosynthesis. In Nitrobacter winogradskyi (strain ATCC 25391 / DSM 10237 / CIP 104748 / NCIMB 11846 / Nb-255), this protein is Elongation factor Tu.